Here is a 166-residue protein sequence, read N- to C-terminus: Putative pre-16S rRNA nuclease (166 aa).

The segment at 1–24 (MPDTAAPTPDRPGPDDPGRGRRLG) is disordered.

The protein belongs to the YqgF nuclease family.

It localises to the cytoplasm. In terms of biological role, could be a nuclease involved in processing of the 5'-end of pre-16S rRNA. In Mycobacteroides abscessus (strain ATCC 19977 / DSM 44196 / CCUG 20993 / CIP 104536 / JCM 13569 / NCTC 13031 / TMC 1543 / L948) (Mycobacterium abscessus), this protein is Putative pre-16S rRNA nuclease.